Reading from the N-terminus, the 418-residue chain is Delta(14)-sterol reductase TM7SF2 (418 aa).

6 helical membrane passes run 13 to 35 (FGGP…HLLL), 62 to 81 (ALLL…LLPA), 102 to 124 (GFQA…LPLS), 129 to 148 (MLLP…SLLL), 255 to 277 (FGFM…QAQF), and 287 to 304 (WPLA…YYIF). Residues Lys311, Arg315, Leu338, Trp343, and 350–351 (NY) each bind NADP(+). A helical membrane pass occupies residues 355–377 (LIMALAWSLPCGVFHLLPYFYFL). NADP(+) is bound by residues Asp390, 394–398 (CRQKY), and Tyr405.

It belongs to the ERG4/ERG24 family. As to expression, highly expressed in liver and brain.

The protein localises to the microsome membrane. Its subcellular location is the endoplasmic reticulum membrane. It carries out the reaction 4,4-dimethyl-5alpha-cholesta-8,24-dien-3beta-ol + NADP(+) = 4,4-dimethyl-5alpha-cholesta-8,14,24-trien-3beta-ol + NADPH + H(+). The catalysed reaction is 5alpha-cholest-8,14-dien-3beta-ol + NADPH + H(+) = 5alpha-cholest-8-en-3beta-ol + NADP(+). It catalyses the reaction 4,4-dimethyl-8,14-cholestadien-3beta-ol + NADPH + H(+) = 4,4-dimethyl-5alpha-cholest-8-en-3beta-ol + NADP(+). It functions in the pathway steroid biosynthesis; cholesterol biosynthesis. Catalyzes the reduction of the C14-unsaturated bond of lanosterol, as part of the metabolic pathway leading to cholesterol biosynthesis. This is Delta(14)-sterol reductase TM7SF2 (TM7SF2) from Bos taurus (Bovine).